We begin with the raw amino-acid sequence, 968 residues long: Protein translocase subunit SecA (968 aa).

Residues Gln-99, 117–121 (GEGKT), and Asp-631 contribute to the ATP site.

This sequence belongs to the SecA family. Monomer and homodimer. Part of the essential Sec protein translocation apparatus which comprises SecA, SecYEG and auxiliary proteins SecDF. Other proteins may also be involved.

Its subcellular location is the cell inner membrane. It is found in the cytoplasm. The enzyme catalyses ATP + H2O + cellular proteinSide 1 = ADP + phosphate + cellular proteinSide 2.. Part of the Sec protein translocase complex. Interacts with the SecYEG preprotein conducting channel. Has a central role in coupling the hydrolysis of ATP to the transfer of proteins into and across the cell membrane, serving as an ATP-driven molecular motor driving the stepwise translocation of polypeptide chains across the membrane. The protein is Protein translocase subunit SecA of Chlamydia muridarum (strain MoPn / Nigg).